The following is a 211-amino-acid chain: Methylated-DNA--protein-cysteine methyltransferase (211 aa).

Cys5 serves as a coordination point for Zn(2+). Residue Ser14 is modified to Phosphoserine. Zn(2+)-binding residues include Cys24 and His29. The interval 35–57 is disordered; it reads SGKTPNTDPTEAPATPEVLGGPE. His89 is a Zn(2+) binding site. Residues Thr99, Tyr118, Gln119, Asn127, and Arg132 each coordinate DNA. Cys149 functions as the Nucleophile; methyl group acceptor in the catalytic mechanism. A DNA-binding site is contributed by Ser155. At Ser205 the chain carries Phosphoserine.

The protein belongs to the MGMT family. It depends on Zn(2+) as a cofactor.

The protein localises to the nucleus. The catalysed reaction is a 6-O-methyl-2'-deoxyguanosine in DNA + L-cysteinyl-[protein] = S-methyl-L-cysteinyl-[protein] + a 2'-deoxyguanosine in DNA. The enzyme catalyses a 4-O-methyl-thymidine in DNA + L-cysteinyl-[protein] = a thymidine in DNA + S-methyl-L-cysteinyl-[protein]. In terms of biological role, involved in the cellular defense against the biological effects of O6-methylguanine (O6-MeG) and O4-methylthymine (O4-MeT) in DNA. Repairs the methylated nucleobase in DNA by stoichiometrically transferring the methyl group to a cysteine residue in the enzyme. This is a suicide reaction: the enzyme is irreversibly inactivated. In Mus musculus (Mouse), this protein is Methylated-DNA--protein-cysteine methyltransferase (Mgmt).